We begin with the raw amino-acid sequence, 178 residues long: UPF0114 protein in repA1-repA2 intergenic region (178 aa).

3 helical membrane passes run 14–34 (WLIF…TLKF), 53–73 (LILV…LVMV), and 136–156 (WYVI…YIDR).

Belongs to the UPF0114 family.

Its subcellular location is the cell membrane. This chain is UPF0114 protein in repA1-repA2 intergenic region, found in Buchnera aphidicola subsp. Tetraneura caerulescens.